The following is a 94-amino-acid chain: uncharacterized protein (94 aa).

This is an uncharacterized protein from Homo sapiens (Human).